Reading from the N-terminus, the 465-residue chain is Ribulose bisphosphate carboxylase large chain (465 aa).

Residue Lys-4 is modified to N6,N6,N6-trimethyllysine. Residues Asn-113 and Thr-163 each coordinate substrate. The active-site Proton acceptor is the Lys-165. Lys-167 serves as a coordination point for substrate. The Mg(2+) site is built by Lys-191, Asp-193, and Glu-194. Lys-191 carries the post-translational modification N6-carboxylysine. His-284 serves as the catalytic Proton acceptor. Positions 285, 317, and 369 each coordinate substrate.

It belongs to the RuBisCO large chain family. Type I subfamily. In terms of assembly, heterohexadecamer of 8 large chains and 8 small chains; disulfide-linked. The disulfide link is formed within the large subunit homodimers. Mg(2+) is required as a cofactor. In terms of processing, the disulfide bond which can form in the large chain dimeric partners within the hexadecamer appears to be associated with oxidative stress and protein turnover.

The protein resides in the plastid. It is found in the chloroplast. The catalysed reaction is 2 (2R)-3-phosphoglycerate + 2 H(+) = D-ribulose 1,5-bisphosphate + CO2 + H2O. It carries out the reaction D-ribulose 1,5-bisphosphate + O2 = 2-phosphoglycolate + (2R)-3-phosphoglycerate + 2 H(+). RuBisCO catalyzes two reactions: the carboxylation of D-ribulose 1,5-bisphosphate, the primary event in carbon dioxide fixation, as well as the oxidative fragmentation of the pentose substrate in the photorespiration process. Both reactions occur simultaneously and in competition at the same active site. This is Ribulose bisphosphate carboxylase large chain from Platytheca verticillata.